We begin with the raw amino-acid sequence, 252 residues long: Phosphomannomutase (252 aa).

Residue D13 is the Nucleophile of the active site. D13 and D15 together coordinate Mg(2+). D15 serves as the catalytic Proton donor/acceptor. 6 residues coordinate alpha-D-mannose 1-phosphate: R22, R124, R135, R142, S180, and D182. Mg(2+)-binding residues include D208, Y220, and T225.

It belongs to the eukaryotic PMM family. As to quaternary structure, homodimer. It depends on Mg(2+) as a cofactor. In terms of tissue distribution, expressed in roots, leaves, stems and flowers.

It is found in the cytoplasm. The enzyme catalyses alpha-D-mannose 1-phosphate = D-mannose 6-phosphate. The protein operates within nucleotide-sugar biosynthesis; GDP-alpha-D-mannose biosynthesis; alpha-D-mannose 1-phosphate from D-fructose 6-phosphate: step 2/2. Its function is as follows. Catalyzes the interconversion of mannose-6-phosphate to mannose-1-phosphate, the precursor for the synthesis of GDP-mannose. GDP-mannose is an essential sugar nucleotide for the synthesis of D-mannose-containing cell wall polysaccharides (galactomannans and glucomannans), glycolipids, glycoproteins and the antioxidant L-ascorbate. Involved in the biosynthesis of ascorbate and polysaccharides in response to abiotic stress during seed germination. This is Phosphomannomutase from Dendrobium officinale (Orchid).